An 844-amino-acid polypeptide reads, in one-letter code: RING finger containing E3 ubiquitin-protein ligase WSV222 (844 aa).

229–236 (AEDDKGKT) provides a ligand contact to ATP. An RING-type; atypical zinc finger spans residues 308–359 (CGVCATSVEEDENEGKTTSLSWYQMNCKHYIHCECLMGMCAAAGNVQCPMCR).

Interacts with host UBE2E1/UBCH6; this interaction results in WSV222 auto-ubiquitination. Interacts with host tumor suppressor-like protein.

It catalyses the reaction S-ubiquitinyl-[E2 ubiquitin-conjugating enzyme]-L-cysteine + [acceptor protein]-L-lysine = [E2 ubiquitin-conjugating enzyme]-L-cysteine + N(6)-ubiquitinyl-[acceptor protein]-L-lysine.. The protein operates within protein modification; protein ubiquitination. Its function is as follows. Probable E3 ubiquitin-protein ligase which accepts ubiquitin from the E2 ubiquitin-conjugating enzyme UBE2E1/UBCH6 in the form of a thioester and then directly transfers the ubiquitin to targeted substrates. Mediates ubiquitination of host tumor-suppressor-like protein (TSL) targeting it for degradation. Might function as an anti-apoptosis protein by counteracting TSL-induced apoptosis. The protein is RING finger containing E3 ubiquitin-protein ligase WSV222 of White spot syndrome virus (isolate Shrimp/China/Tongan/1996) (WSSV).